Here is a 107-residue protein sequence, read N- to C-terminus: Protein TAP1 (107 aa).

Residues 1-23 form the signal peptide; that stretch reads MESKRVDVLVGLMLIMAIFGVHS.

In terms of tissue distribution, stamen.

The chain is Protein TAP1 (TAP1) from Antirrhinum majus (Garden snapdragon).